Here is a 356-residue protein sequence, read N- to C-terminus: UDP-N-acetylglucosamine--N-acetylmuramyl-(pentapeptide) pyrophosphoryl-undecaprenol N-acetylglucosamine transferase (356 aa).

Residues Ser-195 and Gln-287 each coordinate UDP-N-acetyl-alpha-D-glucosamine.

Belongs to the glycosyltransferase 28 family. MurG subfamily.

It localises to the cell membrane. The enzyme catalyses Mur2Ac(oyl-L-Ala-gamma-D-Glu-L-Lys-D-Ala-D-Ala)-di-trans,octa-cis-undecaprenyl diphosphate + UDP-N-acetyl-alpha-D-glucosamine = beta-D-GlcNAc-(1-&gt;4)-Mur2Ac(oyl-L-Ala-gamma-D-Glu-L-Lys-D-Ala-D-Ala)-di-trans,octa-cis-undecaprenyl diphosphate + UDP + H(+). It participates in cell wall biogenesis; peptidoglycan biosynthesis. Its function is as follows. Cell wall formation. Catalyzes the transfer of a GlcNAc subunit on undecaprenyl-pyrophosphoryl-MurNAc-pentapeptide (lipid intermediate I) to form undecaprenyl-pyrophosphoryl-MurNAc-(pentapeptide)GlcNAc (lipid intermediate II). This chain is UDP-N-acetylglucosamine--N-acetylmuramyl-(pentapeptide) pyrophosphoryl-undecaprenol N-acetylglucosamine transferase, found in Streptococcus sanguinis (strain SK36).